Reading from the N-terminus, the 324-residue chain is Carbamate kinase (324 aa).

Belongs to the carbamate kinase family.

Its subcellular location is the cytoplasm. It catalyses the reaction hydrogencarbonate + NH4(+) + ATP = carbamoyl phosphate + ADP + H2O + H(+). Its pathway is amino-acid degradation; L-arginine degradation via ADI pathway. The protein is Carbamate kinase of Rhizobium meliloti (strain 1021) (Ensifer meliloti).